Reading from the N-terminus, the 428-residue chain is GTPase Obg (428 aa).

The Obg domain occupies 1 to 158 (MFVDQVKIYV…RDVILELKVL (158 aa)). The OBG-type G domain maps to 159-329 (ADVGLVGFPS…LLFEVANLIE (171 aa)). GTP-binding positions include 165 to 172 (GFPSVGKS), 190 to 194 (FTTIV), 212 to 215 (DLPG), 282 to 285 (NKMD), and 310 to 312 (SAV). Mg(2+) is bound by residues S172 and T192. In terms of domain architecture, OCT spans 350–428 (KFETEGVKFD…ILEYEFEFID (79 aa)).

Belongs to the TRAFAC class OBG-HflX-like GTPase superfamily. OBG GTPase family. In terms of assembly, monomer. Mg(2+) serves as cofactor.

It localises to the cytoplasm. Functionally, an essential GTPase which binds GTP, GDP and possibly (p)ppGpp with moderate affinity, with high nucleotide exchange rates and a fairly low GTP hydrolysis rate. Plays a role in control of the cell cycle, stress response, ribosome biogenesis and in those bacteria that undergo differentiation, in morphogenesis control. The chain is GTPase Obg from Bacillus cereus (strain AH820).